The primary structure comprises 502 residues: MFS-type transporeter aprT (502 aa).

Positions methionine 1–proline 38 are disordered. Transmembrane regions (helical) follow at residues histidine 45–isoleucine 65, isoleucine 114–alanine 136, valine 150–proline 170, tryptophan 175–tryptophan 195, phenylalanine 214–lysine 234, valine 239–proline 259, valine 302–valine 322, alanine 336–proline 356, valine 380–isoleucine 400, leucine 403–leucine 423, and leucine 464–leucine 484. Asparagine 495 is a glycosylation site (N-linked (GlcNAc...) asparagine).

It belongs to the major facilitator superfamily.

The protein resides in the cell membrane. Its function is as follows. MFS-rype transporer; part of the gene cluster that mediates the biosynthesis of the asperipin-2a, a bicyclic peptide that possesses two macrocyclic ether rings consisting of 14- and 17-membered paracyclophans. AprT is likely to be involved in the cellular export of asperipin-2a. The chain is MFS-type transporeter aprT from Aspergillus flavus (strain ATCC 200026 / FGSC A1120 / IAM 13836 / NRRL 3357 / JCM 12722 / SRRC 167).